The sequence spans 227 residues: Max dimerization protein 1 (227 aa).

The Nuclear localization signal motif lies at 21 to 48 (RREREAEHGYASMLPYSKDRDAFKRRNK). 3 disordered regions span residues 30 to 66 (YASM…MEKN), 142 to 161 (MDSV…REEL), and 184 to 227 (GWSS…GLGL). The bHLH domain maps to 55–107 (SSRSTHNEMEKNRRAHLRLCLEKLKGLVPLGPESSRHTTLSLLTKAKLHIKKL). The span at 198-211 (MQSLGSDEGYSSAT) shows a compositional bias: polar residues. Over residues 216–227 (KLQDGHKAGLGL) the composition is skewed to basic and acidic residues.

In terms of assembly, heterodimer with MAX; the interaction is required for DNA-binding. DNA binding requires dimerization with another bHLH protein; does not form homodimers, and does not bind to DNA in the absence of MAX in vitro. Interacts with RNF17. In terms of processing, ubiquitinated by BIRC2/c-IAP1, leading to its subsequent degradation by the proteasome.

It localises to the nucleus. Its function is as follows. Component of a transcriptional repressor complex together with MAX. In complex with MAX binds to the core DNA sequence 5'-CAC[GA]TG-3'. Antagonizes MYC transcriptional activity by competing with MYC for MAX binding. Binds to the TERT promoter and represses telomerase expression, possibly by interfering with MYC binding. In Mus musculus (Mouse), this protein is Max dimerization protein 1 (Mxd1).